Consider the following 183-residue polypeptide: MKLAVIAKPYANAIFELAQQDNSHLQWKMVLDVGAYLLLDKKMRRLIASPNILEQDKLSTIKALLMSILNRELDAHEAMFISVLLDNNRIGILPSIATLFESLINITNNIKIFTIISSYQLSKSEKEQIVSDLMNQYNKTVSIDIVVDKDLVGGVIIKDGDKVIDISIKARVDELGLRLSKTH.

Belongs to the ATPase delta chain family. In terms of assembly, F-type ATPases have 2 components, F(1) - the catalytic core - and F(0) - the membrane proton channel. F(1) has five subunits: alpha(3), beta(3), gamma(1), delta(1), epsilon(1). F(0) has three main subunits: a(1), b(2) and c(10-14). The alpha and beta chains form an alternating ring which encloses part of the gamma chain. F(1) is attached to F(0) by a central stalk formed by the gamma and epsilon chains, while a peripheral stalk is formed by the delta and b chains.

The protein localises to the cell inner membrane. Functionally, f(1)F(0) ATP synthase produces ATP from ADP in the presence of a proton or sodium gradient. F-type ATPases consist of two structural domains, F(1) containing the extramembraneous catalytic core and F(0) containing the membrane proton channel, linked together by a central stalk and a peripheral stalk. During catalysis, ATP synthesis in the catalytic domain of F(1) is coupled via a rotary mechanism of the central stalk subunits to proton translocation. Its function is as follows. This protein is part of the stalk that links CF(0) to CF(1). It either transmits conformational changes from CF(0) to CF(1) or is implicated in proton conduction. The sequence is that of ATP synthase subunit delta from Vesicomyosocius okutanii subsp. Calyptogena okutanii (strain HA).